Here is a 325-residue protein sequence, read N- to C-terminus: Leucine carboxyl methyltransferase 1 (325 aa).

S-adenosyl-L-methionine-binding positions include Arg-79, Gly-104, Asp-127, 174 to 175 (DL), and Glu-200.

It belongs to the methyltransferase superfamily. LCMT family.

The enzyme catalyses [phosphatase 2A protein]-C-terminal L-leucine + S-adenosyl-L-methionine = [phosphatase 2A protein]-C-terminal L-leucine methyl ester + S-adenosyl-L-homocysteine. Its function is as follows. Methylates the carboxyl group of the C-terminal leucine residue of protein phosphatase 2A catalytic subunits to form alpha-leucine ester residues. This is Leucine carboxyl methyltransferase 1 (PPM1) from Eremothecium gossypii (strain ATCC 10895 / CBS 109.51 / FGSC 9923 / NRRL Y-1056) (Yeast).